The primary structure comprises 253 residues: Probable transcriptional regulatory protein KRH_13670 (253 aa).

This sequence belongs to the TACO1 family.

The protein resides in the cytoplasm. The sequence is that of Probable transcriptional regulatory protein KRH_13670 from Kocuria rhizophila (strain ATCC 9341 / DSM 348 / NBRC 103217 / DC2201).